The following is a 127-amino-acid chain: Small ribosomal subunit protein bS6 (127 aa).

Residues glutamate 106 to glutamate 117 show a composition bias toward basic and acidic residues. A disordered region spans residues glutamate 106–alanine 127. Positions valine 118–alanine 127 are enriched in acidic residues.

This sequence belongs to the bacterial ribosomal protein bS6 family.

Binds together with bS18 to 16S ribosomal RNA. This chain is Small ribosomal subunit protein bS6, found in Thermotoga neapolitana (strain ATCC 49049 / DSM 4359 / NBRC 107923 / NS-E).